A 336-amino-acid chain; its full sequence is Dihydroorotate dehydrogenase (quinone) (336 aa).

Residues 62–66 (AGLDK) and Thr-86 contribute to the FMN site. Lys-66 contacts substrate. 111–115 (NRMGF) is a substrate binding site. Residues Asn-139 and Asn-172 each coordinate FMN. Substrate is bound at residue Asn-172. The active-site Nucleophile is Ser-175. Asn-177 contributes to the substrate binding site. Positions 217 and 245 each coordinate FMN. A substrate-binding site is contributed by 246–247 (NT). Residues Gly-268, Gly-297, and 318-319 (YS) contribute to the FMN site.

The protein belongs to the dihydroorotate dehydrogenase family. Type 2 subfamily. In terms of assembly, monomer. It depends on FMN as a cofactor.

The protein resides in the cell membrane. It catalyses the reaction (S)-dihydroorotate + a quinone = orotate + a quinol. It functions in the pathway pyrimidine metabolism; UMP biosynthesis via de novo pathway; orotate from (S)-dihydroorotate (quinone route): step 1/1. Functionally, catalyzes the conversion of dihydroorotate to orotate with quinone as electron acceptor. This chain is Dihydroorotate dehydrogenase (quinone), found in Aliivibrio fischeri (strain ATCC 700601 / ES114) (Vibrio fischeri).